The following is a 72-amino-acid chain: Translation initiation factor IF-1 2 (72 aa).

An S1-like domain is found at 1 to 72 (MAKDDVIQMQ…SRARIVFRTK (72 aa)).

The protein belongs to the IF-1 family. In terms of assembly, component of the 30S ribosomal translation pre-initiation complex which assembles on the 30S ribosome in the order IF-2 and IF-3, IF-1 and N-formylmethionyl-tRNA(fMet); mRNA recruitment can occur at any time during PIC assembly.

It is found in the cytoplasm. One of the essential components for the initiation of protein synthesis. Stabilizes the binding of IF-2 and IF-3 on the 30S subunit to which N-formylmethionyl-tRNA(fMet) subsequently binds. Helps modulate mRNA selection, yielding the 30S pre-initiation complex (PIC). Upon addition of the 50S ribosomal subunit IF-1, IF-2 and IF-3 are released leaving the mature 70S translation initiation complex. The sequence is that of Translation initiation factor IF-1 2 from Cupriavidus necator (strain ATCC 17699 / DSM 428 / KCTC 22496 / NCIMB 10442 / H16 / Stanier 337) (Ralstonia eutropha).